Reading from the N-terminus, the 197-residue chain is Fucoxanthin-chlorophyll a-c binding protein D, chloroplastic (197 aa).

A chloroplast-targeting transit peptide spans 1–31 (MKTAVIASLIAGAAAFAPAKNAARTSVATNM). 3 consecutive transmembrane segments (helical) span residues 73-94 (ISML…PGTI), 114-133 (PAGG…SSVM), and 174-196 (GRAA…SLLP).

This sequence belongs to the fucoxanthin chlorophyll protein family. In terms of assembly, the LHC complex of chromophytic algae is composed of fucoxanthin, chlorophyll A and C bound non-covalently by fucoxanthin chlorophyll proteins (FCPs). The ratio of the pigments in LHC; fucoxanthin: chlorophyll C: chlorophyll A; (0.6-1): (0.1-0.3): (1).

It localises to the plastid. It is found in the chloroplast thylakoid membrane. Functionally, the light-harvesting complex (LHC) functions as a light receptor, it captures and delivers excitation energy to photosystems with which it is closely associated. Energy is transferred from the carotenoid and chlorophyll C (or B) to chlorophyll A and the photosynthetic reaction centers where it is used to synthesize ATP and reducing power. The sequence is that of Fucoxanthin-chlorophyll a-c binding protein D, chloroplastic (FCPD) from Phaeodactylum tricornutum (Diatom).